The primary structure comprises 408 residues: MKCLCFIVLLAIVIAQSYVGVEAAPSDGFVSRNGVQFILNGKPFYANGFNAYWLAYEATDPTTRFKITNVFQNATSLGLTIARTWGFRDGAIYRALQTAPGSYDEQTFQGLDFVIAEAKRIGIKLIILLVNNWDDYGGKKQYVDWARSKGEVVSSNDDFYRNPVIKDFYKNHVKTVLNRVNTFTKVAYKDEPAIMAWQLMNEPRCGVDKSGKTLMDWINEMAPFVKSVDPNHLLSTGHEGFYGDSSPERKNSLNPVSANTVGADFIANHNIDAIDFASMHCGSDLWFQRLDQNSRLAFIKRWLEGHIEDAQNILKKPVILAEFGLGSDTPRYTLANRDGVFTTTYDIIYASAQKGGSAAGALFWEVISEGMSNFAGPSSIILSDKSSTVNIISEHARKMGLLGETTRK.

Positions Met1–Ala23 are cleaved as a signal peptide. A glycan (N-linked (GlcNAc...) asparagine) is linked at Asn73. Positions 85 and 201 each coordinate substrate. The active-site Proton donor is the Glu202. Catalysis depends on Glu322, which acts as the Nucleophile. Substrate is bound at residue Trp364.

The protein belongs to the glycosyl hydrolase 5 (cellulase A) family.

Its subcellular location is the secreted. It carries out the reaction Random hydrolysis of (1-&gt;4)-beta-D-mannosidic linkages in mannans, galactomannans and glucomannans.. The sequence is that of Putative mannan endo-1,4-beta-mannosidase 4 (MAN4) from Arabidopsis thaliana (Mouse-ear cress).